Reading from the N-terminus, the 187-residue chain is ATP synthase subunit b 2 (187 aa).

The segment covering 1-13 (MAESHATGTTTHT) has biased composition (polar residues). The segment at 1–21 (MAESHATGTTTHTEVPHGKPE) is disordered. A helical transmembrane segment spans residues 31–53 (ASQLVSFAIAFALLYVIVSRFAL).

The protein belongs to the ATPase B chain family. F-type ATPases have 2 components, F(1) - the catalytic core - and F(0) - the membrane proton channel. F(1) has five subunits: alpha(3), beta(3), gamma(1), delta(1), epsilon(1). F(0) has three main subunits: a(1), b(2) and c(10-14). The alpha and beta chains form an alternating ring which encloses part of the gamma chain. F(1) is attached to F(0) by a central stalk formed by the gamma and epsilon chains, while a peripheral stalk is formed by the delta and b chains.

The protein localises to the cell inner membrane. In terms of biological role, f(1)F(0) ATP synthase produces ATP from ADP in the presence of a proton or sodium gradient. F-type ATPases consist of two structural domains, F(1) containing the extramembraneous catalytic core and F(0) containing the membrane proton channel, linked together by a central stalk and a peripheral stalk. During catalysis, ATP synthesis in the catalytic domain of F(1) is coupled via a rotary mechanism of the central stalk subunits to proton translocation. Its function is as follows. Component of the F(0) channel, it forms part of the peripheral stalk, linking F(1) to F(0). The b'-subunit is a diverged and duplicated form of b found in plants and photosynthetic bacteria. The protein is ATP synthase subunit b 2 (atpF2) of Afipia carboxidovorans (strain ATCC 49405 / DSM 1227 / KCTC 32145 / OM5) (Oligotropha carboxidovorans).